The sequence spans 274 residues: Large ribosomal subunit protein uL2 (274 aa).

The disordered stretch occupies residues 223 to 274 (VVMNPVDHPHGGGEGRTSGGRHPVSPWGVPTKGYKTRSNKRTDKYIVRRRNK).

This sequence belongs to the universal ribosomal protein uL2 family. Part of the 50S ribosomal subunit. Forms a bridge to the 30S subunit in the 70S ribosome.

Its function is as follows. One of the primary rRNA binding proteins. Required for association of the 30S and 50S subunits to form the 70S ribosome, for tRNA binding and peptide bond formation. It has been suggested to have peptidyltransferase activity; this is somewhat controversial. Makes several contacts with the 16S rRNA in the 70S ribosome. The polypeptide is Large ribosomal subunit protein uL2 (Vibrio cholerae serotype O1 (strain M66-2)).